Here is a 205-residue protein sequence, read N- to C-terminus: Proteasome subunit beta type-3 (205 aa).

Belongs to the peptidase T1B family. As to quaternary structure, the 26S proteasome consists of a 20S proteasome core and two 19S regulatory subunits. The 20S proteasome core is composed of 28 subunits that are arranged in four stacked rings, resulting in a barrel-shaped structure. The two end rings are each formed by seven alpha subunits, and the two central rings are each formed by seven beta subunits. The catalytic chamber with the active sites is on the inside of the barrel.

The protein resides in the cytoplasm. It is found in the nucleus. In terms of biological role, non-catalytic component of the proteasome, a multicatalytic proteinase complex which is characterized by its ability to cleave peptides with Arg, Phe, Tyr, Leu, and Glu adjacent to the leaving group at neutral or slightly basic pH. The proteasome has an ATP-dependent proteolytic activity. The polypeptide is Proteasome subunit beta type-3 (psmB3) (Dictyostelium discoideum (Social amoeba)).